The sequence spans 316 residues: Polyprenyl transferase ausN (316 aa).

9 helical membrane passes run 45-65 (VVGV…TFLL), 69-89 (VILS…NDLI), 108-128 (GAVS…CGGS), 129-149 (LLLL…FFAL), 163-183 (LILT…DMNP), 188-208 (IPTL…DIVY), 233-253 (DQIA…GGIL), 256-276 (LGIP…LRFL), and 296-316 (SCLL…CVRL).

It belongs to the UbiA prenyltransferase family. The cofactor is Mg(2+).

Its subcellular location is the membrane. The catalysed reaction is 3,5-dimethylorsellinate + (2E,6E)-farnesyl diphosphate = (3R)-3-farnesyl-6-hydroxy-2,3,5-trimethyl-4-oxocyclohexa-1,5-diene-1-carboxylate + diphosphate + H(+). It functions in the pathway secondary metabolite biosynthesis; terpenoid biosynthesis. Polyprenyl transferase; part of the gene cluster A that mediates the biosynthesis of the fungal meroterpenoid acetoxydehydroaustin. The first step of the pathway is the synthesis of 3,5-dimethylorsellinic acid by the polyketide synthase ausA. 3,5-dimethylorsellinic acid is then prenylated by the polyprenyl transferase ausN. Further epoxidation by the FAD-dependent monooxygenase ausM and cyclization by the probable terpene cyclase ausL lead to the formation of protoaustinoid A. Protoaustinoid A is then oxidized to spiro-lactone preaustinoid A3 by the combined action of the FAD-binding monooxygenases ausB and ausC, and the dioxygenase ausE. Acid-catalyzed keto-rearrangement and ring contraction of the tetraketide portion of preaustinoid A3 by ausJ lead to the formation of preaustinoid A4. The aldo-keto reductase ausK, with the help of ausH, is involved in the next step by transforming preaustinoid A4 into isoaustinone which is in turn hydroxylated by the P450 monooxygenase ausI to form austinolide. The cytochrome P450 monooxygenase ausG then modifies austinolide to austinol. Austinol is further acetylated to austin by the O-acetyltransferase ausP, which spontaneously changes to dehydroaustin. The cytochrome P450 monooxygenase then converts dehydroaustin is into 7-dehydrodehydroaustin. The hydroxylation catalyzed by ausR permits the second O-acetyltransferase ausQ to add an additional acetyl group to the molecule, leading to the formation of acetoxydehydroaustin. Due to genetic rearrangements of the clusters and the subsequent loss of some enzymes, the end product of the Penicillium brasilianum austinoid biosynthesis clusters is acetoxydehydroaustin. The sequence is that of Polyprenyl transferase ausN from Penicillium brasilianum.